Consider the following 307-residue polypeptide: MTKKMGLLVMAYGTPYKESDIEPYYTDIRHGKRPSEEELQDLKDRYEFIGGLSPLAGTTDDQADALVSALNKAYADVEFKLYLGLKHISPFIEDAVEQMHNDGITEAITVVLAPHYSSFSVGSYDKRADEEAAKYGIQLTHVKHYYEQPKFIEYWTNKVNETLAQIPEEEHKDTVLVVSAHSLPKGLIEKNNDPYPQELEHTALLIKEQSNIEHIAIGWQSEGNTGTPWLGPDVQDLTRDLYEKHQYKNFIYTPVGFVCEHLEVLYDNDYECKVVCDDIGANYYRPKMPNTHPLFIGAIVDEIKSIF.

Residues Y12, R29, 45-46 (RY), S53, and Y124 contribute to the Fe-coproporphyrin III site. Fe(2+) is bound by residues H181 and E263.

This sequence belongs to the ferrochelatase family.

The protein localises to the cytoplasm. The enzyme catalyses Fe-coproporphyrin III + 2 H(+) = coproporphyrin III + Fe(2+). Its pathway is porphyrin-containing compound metabolism; protoheme biosynthesis. Functionally, involved in coproporphyrin-dependent heme b biosynthesis. Catalyzes the insertion of ferrous iron into coproporphyrin III to form Fe-coproporphyrin III. The polypeptide is Coproporphyrin III ferrochelatase (Staphylococcus aureus (strain COL)).